The sequence spans 539 residues: Phosphatidylinositol 4-phosphate 5-kinase type-1 beta (539 aa).

The segment at 1 to 21 (MSSTAENGDAVPGKQNEEKTY) is disordered. The region spanning 25 to 395 (ASSAIKGAIQ…RFLKFMNSRV (371 aa)) is the PIPK domain. A phosphoserine mark is found at Ser445, Ser447, and Ser448.

In terms of assembly, interacts with RAC1, AJUBA, PLD1, PLD2 and ARF1. Highly expressed in brain and testis. Barely detectable in liver and skeletal muscle.

It localises to the cytoplasm. The protein resides in the cytosol. It is found in the cell membrane. Its subcellular location is the endomembrane system. The enzyme catalyses a 1,2-diacyl-sn-glycero-3-phospho-(1D-myo-inositol 4-phosphate) + ATP = a 1,2-diacyl-sn-glycero-3-phospho-(1D-myo-inositol-4,5-bisphosphate) + ADP + H(+). It carries out the reaction 1-octadecanoyl-2-(5Z,8Z,11Z,14Z)-eicosatetraenoyl-sn-glycero-3-phospho-1D-myo-inositol 4-phosphate + ATP = 1-octadecanoyl-2-(5Z,8Z,11Z,14Z)-eicosatetraenoyl-sn-glycero-3-phospho-1D-myo-inositol 4,5-bisphosphate + ADP + H(+). It catalyses the reaction 1-octadecanoyl-2-(9Z)-octadecenoyl-sn-glycero-3-phospho-1D-myo-inositol 4-phosphate + ATP = 1-octadecanoyl-2-(9Z)-octadecenoyl-sn-glycero-3-phospho-1D-myo-inositol 4,5-bisphosphate + ADP + H(+). The catalysed reaction is 1-octadecanoyl-2-(9Z)-octadecenoyl-sn-glycero-3-phospho-1D-myo-inositol + ATP = 1-octadecanoyl-2-(9Z)-octadecenoyl-sn-glycero-3-phospho-1D-myo-inositol 5-phosphate + ADP + H(+). The enzyme catalyses 1-octadecanoyl-2-(9Z,12Z)-octadecadienoyl-sn-glycero-3-phospho-1D-myo-inositol + ATP = 1-octadecanoyl-2-(9Z,12Z)-octadecadienoyl-sn-glycero-3-phospho-1D-myo-inositol 5-phosphate + ADP + H(+). It carries out the reaction 1-octadecanoyl-2-(5Z,8Z,11Z,14Z-eicosatetraenoyl)-sn-glycero-3-phospho-(1D-myo-inositol) + ATP = 1-octadecanoyl-2-(5Z,8Z,11Z,14Z)-eicosatetraenoyl-sn-glycero-3-phospho-1D-myo-inositol 5-phosphate + ADP + H(+). It catalyses the reaction 1,2-di-(9Z,12Z)-octadecadienoyl-sn-glycero-3-phospho-1D-myo-inositol + ATP = 1,2-di(9Z,12Z)-octadecadienoyl-sn-glycero-3-phospho-1D-myo-inositol 5-phosphate + ADP + H(+). Its activity is regulated as follows. Activated by phosphatidic acid. Catalyzes the phosphorylation of phosphatidylinositol 4-phosphate (PtdIns(4)P/PI4P) to form phosphatidylinositol 4,5-bisphosphate (PtdIns(4,5)P2/PIP2), a lipid second messenger that regulates several cellular processes such as signal transduction, vesicle trafficking, actin cytoskeleton dynamics, cell adhesion, and cell motility. PtdIns(4,5)P2 can directly act as a second messenger or can be utilized as a precursor to generate other second messengers: inositol 1,4,5-trisphosphate (IP3), diacylglycerol (DAG) or phosphatidylinositol-3,4,5-trisphosphate (PtdIns(3,4,5)P3/PIP3). Mediates RAC1-dependent reorganization of actin filaments. Contributes to the activation of phospholipase PLD2. Together with PIP5K1A, is required, after stimulation by G-protein coupled receptors, for the synthesis of IP3 that will induce stable platelet adhesion. This chain is Phosphatidylinositol 4-phosphate 5-kinase type-1 beta, found in Mus musculus (Mouse).